A 288-amino-acid chain; its full sequence is Threonine-rich protein (288 aa).

The signal sequence occupies residues 1 to 20 (MKAFLLSLATLLACIVLTES). The span at 141–150 (TTVTPQTTDG) shows a compositional bias: polar residues. The interval 141–260 (TTVTPQTTDG…PAPTTTPAPT (120 aa)) is disordered. Positions 151–253 (NTTTEAPTST…TAAPTTTPAP (103 aa)) are enriched in low complexity.

As to expression, component of the acid-insoluble and acid-soluble organic matrix of the aragonitic skeleton (at protein level).

The protein resides in the secreted. This Acropora millepora (Staghorn coral) protein is Threonine-rich protein.